Consider the following 293-residue polypeptide: Proline iminopeptidase (293 aa).

In terms of domain architecture, AB hydrolase-1 spans 28–277; the sequence is KPLVLLHGGP…YSRHMPFVEE (250 aa). The active-site Nucleophile is the Ser104. Asp244 is a catalytic residue. The active-site Proton donor is His271.

This sequence belongs to the peptidase S33 family.

The enzyme catalyses Release of N-terminal proline from a peptide.. Releases the N-terminal proline from various substrates. This is Proline iminopeptidase from Clostridioides difficile (strain 630) (Peptoclostridium difficile).